We begin with the raw amino-acid sequence, 256 residues long: Homeobox protein ceh-34 (256 aa).

Residues 134 to 193 (GEETNYCFKSKSRNVLRDAYKKCQYPSVEDKRRLAQQTELSIIQVSNWFKNKRQRERAAG) constitute a DNA-binding region (homeobox). A disordered region spans residues 187–233 (QRERAAGQLDRSSARSNDSDDGSSGCESKPPMNIDSPAPPPLPTSFD).

It belongs to the SIX/Sine oculis homeobox family. In terms of assembly, interacts (via N-terminus) with eya-1 (via C-terminus). Shows expression only in the pharyngeal nervous system.

The protein localises to the nucleus. Its function is as follows. Acts as a transcription regulator. Binds to the sequence motif 5'-TCAGGTT-3'. Binds to the cis-regulatory element of proapoptotic factor egl-1 gene and together with eya-1 activates egl-1 expression to promote motor neuron M4 sister cell apoptosis. Also promotes apoptosis of I1 pharyngeal neuron sister cell. Together with eya-1, required to specify the coelomocyte fate in embryonic and postembryonic precursors. Required to establish and maintain the differentiation of all 14 classes of pharyngeal neurons. Controls the neurotransmitter signaling capacity of the neurons and is required for the expression of some neurotransmitter receptors including mgl-1, glr-2 and ser-7. Affects the neuropeptidergic identity of pharyngeal neurons. Required for the pharyngeal expression of sensory receptors gur-3, glu-7 and str-97, antimicrobial defense genes such as spp-12, gpla-1/flr-2 and htrl-1, and pan-pharyngeal nervous system genes such as kin-36. Required to establish and maintain pharyngeal nervous system architecture by ensuring correct axon and synapse organization. Required for expression of eya-1 which may act as a transcriptional cofactor to specify distinct pharyngeal neuron types. Cooperates with several homeobox proteins to specify distinct pharyngeal neuron types including unc-86 in the NSM and I1 neurons, ceh-14 in the I2 neuron, ceh-2 and pros-1 in the I3 neuron, ceh-45 in the M1 neuron, ceh-2 in the M3 neuron, ceh-28 and zag-1 in the M4 neuron, and vab-15 in the M5 neuron. The polypeptide is Homeobox protein ceh-34 (ceh-34) (Caenorhabditis elegans).